The chain runs to 433 residues: 3-phosphoshikimate 1-carboxyvinyltransferase (433 aa).

Residues Lys-22, Ser-23, and Arg-27 each contribute to the 3-phosphoshikimate site. Lys-22 contributes to the phosphoenolpyruvate binding site. The phosphoenolpyruvate site is built by Gly-95 and Arg-123. Ser-167, Gln-169, Asp-315, and Lys-342 together coordinate 3-phosphoshikimate. Gln-169 provides a ligand contact to phosphoenolpyruvate. The active-site Proton acceptor is the Asp-315. Positions 346 and 387 each coordinate phosphoenolpyruvate.

It belongs to the EPSP synthase family. Monomer.

The protein resides in the cytoplasm. The catalysed reaction is 3-phosphoshikimate + phosphoenolpyruvate = 5-O-(1-carboxyvinyl)-3-phosphoshikimate + phosphate. It functions in the pathway metabolic intermediate biosynthesis; chorismate biosynthesis; chorismate from D-erythrose 4-phosphate and phosphoenolpyruvate: step 6/7. Functionally, catalyzes the transfer of the enolpyruvyl moiety of phosphoenolpyruvate (PEP) to the 5-hydroxyl of shikimate-3-phosphate (S3P) to produce enolpyruvyl shikimate-3-phosphate and inorganic phosphate. In Legionella pneumophila (strain Paris), this protein is 3-phosphoshikimate 1-carboxyvinyltransferase.